Reading from the N-terminus, the 101-residue chain is Small ribosomal subunit protein uS14A (101 aa).

The segment at 29–73 (AIISSPSTPADARAAAQSELNRQPRDASPVRVRNRDAVDGRPRGH) is disordered. A compositionally biased stretch (basic and acidic residues) spans 61–70 (RNRDAVDGRP).

It belongs to the universal ribosomal protein uS14 family. In terms of assembly, part of the 30S ribosomal subunit. Contacts proteins S3 and S10.

In terms of biological role, binds 16S rRNA, required for the assembly of 30S particles and may also be responsible for determining the conformation of the 16S rRNA at the A site. The protein is Small ribosomal subunit protein uS14A of Mycolicibacterium gilvum (strain PYR-GCK) (Mycobacterium gilvum (strain PYR-GCK)).